Here is a 663-residue protein sequence, read N- to C-terminus: Putative glucosamine-6-phosphate deaminase-like protein BT_0258 (663 aa).

A glucosamine-6-phosphate deaminase-like region spans residues 1-290 (MKTNLSSQIT…NLTRIQRPWL (290 aa)). Glu184 is an active-site residue.

It in the N-terminal section; belongs to the glucosamine/galactosamine-6-phosphate isomerase family. NagB subfamily.

This is Putative glucosamine-6-phosphate deaminase-like protein BT_0258 from Bacteroides thetaiotaomicron (strain ATCC 29148 / DSM 2079 / JCM 5827 / CCUG 10774 / NCTC 10582 / VPI-5482 / E50).